The primary structure comprises 465 residues: Fumarate hydratase class II (465 aa).

Substrate is bound by residues 100–102, 131–134, 141–143, and Thr189; these read SGT, HPND, and SSN. His190 serves as the catalytic Proton donor/acceptor. Ser320 is an active-site residue. Residues Ser321 and 326–328 contribute to the substrate site; that span reads KVN.

Belongs to the class-II fumarase/aspartase family. Fumarase subfamily. In terms of assembly, homotetramer.

It is found in the cytoplasm. The catalysed reaction is (S)-malate = fumarate + H2O. It functions in the pathway carbohydrate metabolism; tricarboxylic acid cycle; (S)-malate from fumarate: step 1/1. Involved in the TCA cycle. Catalyzes the stereospecific interconversion of fumarate to L-malate. This is Fumarate hydratase class II from Mesorhizobium japonicum (strain LMG 29417 / CECT 9101 / MAFF 303099) (Mesorhizobium loti (strain MAFF 303099)).